A 126-amino-acid polypeptide reads, in one-letter code: Cystatin-C (126 aa).

An N-terminal signal peptide occupies residues 1–18 (MKMLVFPVLAALFAVGLG). Residues 22–115 (GAPRDINISE…CTFSVWSRPW (94 aa)) form the Cystatin domain. Residues 64–68 (QVVSG) carry the Secondary area of contact motif. 2 disulfide bridges follow: cysteine 82–cysteine 92 and cysteine 106–cysteine 126.

It belongs to the cystatin family. As to expression, ubiquitously expressed in normal tissues including brain, eye, gill, heart, gullet, liver, spleen, stomach, pyloric ceca, intestine, kidney and muscle. Expressed, but not up-regulated, in lipopolysaccharide (LPS)-stimulated tissues including kidney, spleen, muscle and gill.

The protein localises to the secreted. Its function is as follows. Thiol protease inhibitor. Has high papain inhibitory activity and inhibits to a lesser extent fish cathepsins L, S, K, F, X and bovine cathepsin B in vitro. The sequence is that of Cystatin-C from Paralichthys olivaceus (Bastard halibut).